A 232-amino-acid chain; its full sequence is Movement and silencing protein TGBp1 (232 aa).

One can recognise a (+)RNA virus helicase ATP-binding domain in the interval 1-117 (MDVLINKLAS…GPGIVADFVC (117 aa)). The 115-residue stretch at 118 to 232 (NKTKRFGSST…ACPDATFAPS (115 aa)) folds into the (+)RNA virus helicase C-terminal domain.

It belongs to the Tymovirales TGBp1 protein family. In terms of assembly, homodimer and homooligomer. Interacts with capsid protein. Interacts with host AGO1; this interaction targets the host protein for degradation, thereby suppressing the antiviral RNA silencing.

The protein resides in the host cytoplasm. In terms of biological role, transports viral genome to neighboring plant cells directly through plasmosdesmata, without any budding. The movement protein allows efficient cell to cell propagation, by bypassing the host cell wall barrier. Increases plasmodesma size exclusion limit. Acts as a suppressor of RNA-mediated gene silencing, also known as post-transcriptional gene silencing (PTGS), a mechanism of plant viral defense that limits the accumulation of viral RNAs. In Populus balsamifera (Balsam poplar), this protein is Movement and silencing protein TGBp1.